Reading from the N-terminus, the 301-residue chain is Probable aspartoacylase (301 aa).

Zn(2+) contacts are provided by His13 and Glu16. Substrate contacts are provided by residues Arg54 and 61 to 62 (NR). His105 serves as a coordination point for Zn(2+). Positions 163 and 273 each coordinate substrate.

This sequence belongs to the AspA/AstE family. Aspartoacylase subfamily. Zn(2+) is required as a cofactor.

It carries out the reaction an N-acyl-L-aspartate + H2O = a carboxylate + L-aspartate. This Prochlorococcus marinus (strain MIT 9215) protein is Probable aspartoacylase.